A 413-amino-acid chain; its full sequence is MSTTISPLAPKKYPKMPVIEGVRIATAEAGIKYKNRTDLLAMVFDAGTAVAGVFTKSKCPSAPVDFCRQNLAAGKARVLVVNSGNANAFTGKKGRESTALTGEAAAKAAGCTAGEVFLASTGVIGEPLDTTKFSHLLAGLVSDGKPDLWTEAAKAIMTTDTYPKVATQTVKLGDTDVTINGISKGAGMIAPDMATMLSFIATDAPIAAPVLQDLLSRGTAKTFNAVTVDSDTSTSDTLLIFATGKAAKRGAPEITDPKDARLGQFRRALGKVLKSLALQVVRDGEGARKQVEVTVTGAKSARSAKRIALSIANSPLVKTAVAGEDANWGRVVMAVGKAGEPADRDRLSIWFGDIRLAHEGERDPGYSEEATSTYMKRDDIRIRADIGIGRGKATVWTCDLTKEYVAINGDYRS.

Residues Thr158, Lys184, Thr195, Glu285, Asn408, and Ser413 each coordinate substrate. Thr195 (nucleophile) is an active-site residue.

It belongs to the ArgJ family. Heterotetramer of two alpha and two beta chains.

The protein resides in the cytoplasm. It catalyses the reaction N(2)-acetyl-L-ornithine + L-glutamate = N-acetyl-L-glutamate + L-ornithine. It carries out the reaction L-glutamate + acetyl-CoA = N-acetyl-L-glutamate + CoA + H(+). The protein operates within amino-acid biosynthesis; L-arginine biosynthesis; L-ornithine and N-acetyl-L-glutamate from L-glutamate and N(2)-acetyl-L-ornithine (cyclic): step 1/1. It functions in the pathway amino-acid biosynthesis; L-arginine biosynthesis; N(2)-acetyl-L-ornithine from L-glutamate: step 1/4. Functionally, catalyzes two activities which are involved in the cyclic version of arginine biosynthesis: the synthesis of N-acetylglutamate from glutamate and acetyl-CoA as the acetyl donor, and of ornithine by transacetylation between N(2)-acetylornithine and glutamate. This chain is Arginine biosynthesis bifunctional protein ArgJ, found in Mesorhizobium japonicum (strain LMG 29417 / CECT 9101 / MAFF 303099) (Mesorhizobium loti (strain MAFF 303099)).